The sequence spans 314 residues: tRNA pseudouridine synthase B (314 aa).

A substrate-binding site is contributed by histidine 43. Aspartate 48 acts as the Nucleophile in catalysis. Substrate is bound by residues tyrosine 76, tyrosine 179, and leucine 200.

It belongs to the pseudouridine synthase TruB family. Type 1 subfamily.

The catalysed reaction is uridine(55) in tRNA = pseudouridine(55) in tRNA. Its function is as follows. Responsible for synthesis of pseudouridine from uracil-55 in the psi GC loop of transfer RNAs. This Citrobacter koseri (strain ATCC BAA-895 / CDC 4225-83 / SGSC4696) protein is tRNA pseudouridine synthase B.